The primary structure comprises 339 residues: Basic membrane protein A (339 aa).

A signal peptide spans methionine 1 to serine 17. Cysteine 18 carries the N-palmitoyl cysteine lipid modification. Cysteine 18 is lipidated: S-diacylglycerol cysteine.

Belongs to the BMP lipoprotein family. In terms of assembly, monomer.

Its subcellular location is the cell inner membrane. Immunogenic protein. May be part of an ABC-type nucleoside uptake system involved in the purine salvage pathway. In Borreliella burgdorferi (strain ATCC 35210 / DSM 4680 / CIP 102532 / B31) (Borrelia burgdorferi), this protein is Basic membrane protein A (bmpA).